Consider the following 582-residue polypeptide: Protein alan shepard (582 aa).

Positions methionine 1 to glutamine 12 are enriched in pro residues. The disordered stretch occupies residues methionine 1–phenylalanine 73. Tyrosine 5 is subject to Phosphotyrosine. The span at glutamine 13–glutamine 24 shows a compositional bias: low complexity. The span at glutamine 25–arginine 36 shows a compositional bias: gly residues. Positions serine 39–glycine 57 are enriched in polar residues. A compositionally biased stretch (low complexity) spans serine 58–alanine 72. 2 positions are modified to phosphotyrosine: tyrosine 125 and tyrosine 142. The tract at residues proline 164–glycine 225 is disordered. A compositionally biased stretch (low complexity) spans serine 178–glycine 225. RRM domains are found at residues threonine 231 to glutamine 304 and threonine 310 to glycine 389. The interval proline 555–lysine 582 is disordered.

Its function is as follows. Has a role in the perception of gravity. The protein is Protein alan shepard of Drosophila yakuba (Fruit fly).